Consider the following 177-residue polypeptide: UPF0178 protein TP_0845 (177 aa).

Residues 155–177 (EAKTGEEQCDWPSAQGKSQTGRR) are disordered.

It belongs to the UPF0178 family.

The protein is UPF0178 protein TP_0845 of Treponema pallidum (strain Nichols).